A 560-amino-acid chain; its full sequence is MIPTMTSAGWAPGVVQFREYQRRWLRGDVLAGLTVAAYLIPQAMAYATVAGLPPAAGLWASIAPLAIYALLGSSRQLSIGPESATALMTAAVLAPMAAGDLRRYAVLAATLGLLVGLICLLAGTARLGFLASLLSRPVLVGYMAGIALVMISSQLGTITGTSVEGNEFFSEVHSFATSVTRVHWPTFVLAMSVLALLTMLTRWAPRAPGPIIAVLAATMLVAVMSLDAKGIAIVGRIPSGLPTPGVPPVSVEDLRALIIPAAGIAIVTFTDGVLTARAFAARRGQEVNANAELRAVGACNIAAGLTHGFPVSSSSSRTALADVVGGRTQLYSLIALGLVVIVMVFASGLLAMFPIAALGALVVYAALRLIDLSEFRRLARFRRSELMLALATTAAVLGLGVFYGVLAAVALSILELLRRVAHPHDSVLGFVPGIAGMHDIDDYPQAKRVPGLVVYRYDAPLCFANAEDFRRRALTVVDQDPGQVEWFVLNAESNVEVDLTALDALDQLRTELLRRGIVFAMARVKQDLRESLRAASLLDKIGEDHIFMTLPTAVQAFRRR.

The next 11 helical transmembrane spans lie at 29–49 (VLAG…YATV), 51–71 (GLPP…YALL), 79–99 (IGPE…MAAG), 105–125 (AVLA…AGTA), 138–158 (VLVG…LGTI), 184–204 (WPTF…TRWA), 207–227 (APGP…MSLD), 256–276 (ALII…VLTA), 333–353 (LIAL…LAMF), 355–375 (IAAL…LSEF), and 394–414 (AAVL…LSIL). The 116-residue stretch at 442–557 (DYPQAKRVPG…MTLPTAVQAF (116 aa)) folds into the STAS domain.

The protein belongs to the SLC26A/SulP transporter (TC 2.A.53) family.

Its subcellular location is the cell membrane. The protein is Probable sulfate transporter MT1781 of Mycobacterium tuberculosis (strain CDC 1551 / Oshkosh).